A 291-amino-acid polypeptide reads, in one-letter code: N-acetylmannosamine kinase (291 aa).

Residues 5–12 and 132–139 contribute to the ATP site; these read AIDIGGTK and GVGGGVVS. Zn(2+) is bound by residues His156, Cys166, Cys168, and Cys173.

This sequence belongs to the ROK (NagC/XylR) family. NanK subfamily. In terms of assembly, homodimer.

The catalysed reaction is an N-acyl-D-mannosamine + ATP = an N-acyl-D-mannosamine 6-phosphate + ADP + H(+). It functions in the pathway amino-sugar metabolism; N-acetylneuraminate degradation; D-fructose 6-phosphate from N-acetylneuraminate: step 2/5. Functionally, catalyzes the phosphorylation of N-acetylmannosamine (ManNAc) to ManNAc-6-P. This chain is N-acetylmannosamine kinase, found in Escherichia coli (strain SE11).